The sequence spans 697 residues: Elongation factor G (697 aa).

Residues 10-285 (AKTRNIGIMA…GVIDYLPSPL (276 aa)) form the tr-type G domain. GTP-binding positions include 19–26 (AHIDAGKT), 83–87 (DTPGH), and 137–140 (NKMD).

This sequence belongs to the TRAFAC class translation factor GTPase superfamily. Classic translation factor GTPase family. EF-G/EF-2 subfamily.

It localises to the cytoplasm. Its function is as follows. Catalyzes the GTP-dependent ribosomal translocation step during translation elongation. During this step, the ribosome changes from the pre-translocational (PRE) to the post-translocational (POST) state as the newly formed A-site-bound peptidyl-tRNA and P-site-bound deacylated tRNA move to the P and E sites, respectively. Catalyzes the coordinated movement of the two tRNA molecules, the mRNA and conformational changes in the ribosome. In Lactobacillus helveticus (strain DPC 4571), this protein is Elongation factor G.